The chain runs to 442 residues: DNA N(6)-methyladenine demethylase ALKBH1D (442 aa).

Residues 135 to 144 (SMVHFDSTNP) are compositionally biased toward polar residues. The interval 135-185 (SMVHFDSTNPSSSSKSSQSQNLKIRKVRNHRNSGFKSRDQSPQRIKDPPPF) is disordered. The span at 145–154 (SSSSKSSQSQ) shows a compositional bias: low complexity. A compositionally biased stretch (basic residues) spans 157-167 (KIRKVRNHRNS). The span at 170–183 (KSRDQSPQRIKDPP) shows a compositional bias: basic and acidic residues. Positions 332–442 (SPDICIVNFY…GRLNLTFRHF (111 aa)) constitute a Fe2OG dioxygenase domain. Residue 339–341 (NFY) participates in 2-oxoglutarate binding. Fe cation-binding residues include histidine 350, aspartate 352, and histidine 410. 434–440 (RLNLTFR) is a binding site for 2-oxoglutarate.

This sequence belongs to the alkB family. Requires Fe(2+) as cofactor. As to expression, expressed at low levels in roots, seedlings and rosette leaves, but barely in cauline leaves, stems, siliques and flowers.

The protein localises to the nucleus. The protein resides in the cytoplasm. It carries out the reaction an N(6)-methyl-2'-deoxyadenosine in DNA + 2-oxoglutarate + O2 = a 2'-deoxyadenosine in DNA + formaldehyde + succinate + CO2. Dioxygenase that catalyzes DNA N(6)-methyladenine (6 mA) demethylation to modulate gene expression and regulate seed germination. The sequence is that of DNA N(6)-methyladenine demethylase ALKBH1D from Arabidopsis thaliana (Mouse-ear cress).